We begin with the raw amino-acid sequence, 412 residues long: Phosphoglycerate kinase (412 aa).

Residues 24-26 (DLN), Arg-47, 70-73 (HLGR), Arg-130, and Arg-167 contribute to the substrate site. Residues Lys-217, Gly-312, Glu-343, and 369 to 372 (GGDS) each bind ATP.

Belongs to the phosphoglycerate kinase family. In terms of assembly, monomer.

The protein localises to the cytoplasm. The catalysed reaction is (2R)-3-phosphoglycerate + ATP = (2R)-3-phospho-glyceroyl phosphate + ADP. It participates in carbohydrate degradation; glycolysis; pyruvate from D-glyceraldehyde 3-phosphate: step 2/5. The chain is Phosphoglycerate kinase from Kineococcus radiotolerans (strain ATCC BAA-149 / DSM 14245 / SRS30216).